The sequence spans 201 residues: Histidine biosynthesis bifunctional protein HisIE (201 aa).

The tract at residues 1-114 is phosphoribosyl-AMP cyclohydrolase; that stretch reads MLTAQQIEKL…FAPAQTEWGF (114 aa). The tract at residues 115–201 is phosphoribosyl-ATP pyrophosphohydrolase; that stretch reads LYQLEKLLAS…SCVIRRLRER (87 aa).

In the N-terminal section; belongs to the PRA-CH family. It in the C-terminal section; belongs to the PRA-PH family.

It localises to the cytoplasm. It carries out the reaction 1-(5-phospho-beta-D-ribosyl)-ATP + H2O = 1-(5-phospho-beta-D-ribosyl)-5'-AMP + diphosphate + H(+). The catalysed reaction is 1-(5-phospho-beta-D-ribosyl)-5'-AMP + H2O = 1-(5-phospho-beta-D-ribosyl)-5-[(5-phospho-beta-D-ribosylamino)methylideneamino]imidazole-4-carboxamide. The protein operates within amino-acid biosynthesis; L-histidine biosynthesis; L-histidine from 5-phospho-alpha-D-ribose 1-diphosphate: step 2/9. It functions in the pathway amino-acid biosynthesis; L-histidine biosynthesis; L-histidine from 5-phospho-alpha-D-ribose 1-diphosphate: step 3/9. This chain is Histidine biosynthesis bifunctional protein HisIE, found in Photorhabdus laumondii subsp. laumondii (strain DSM 15139 / CIP 105565 / TT01) (Photorhabdus luminescens subsp. laumondii).